The following is a 317-amino-acid chain: Acetyl-coenzyme A carboxylase carboxyl transferase subunit alpha (317 aa).

A CoA carboxyltransferase C-terminal domain is found at 41 to 291 (KVDKLLRSTY…SMALDSALRD (251 aa)).

This sequence belongs to the AccA family. In terms of assembly, acetyl-CoA carboxylase is a heterohexamer composed of biotin carboxyl carrier protein (AccB), biotin carboxylase (AccC) and two subunits each of ACCase subunit alpha (AccA) and ACCase subunit beta (AccD).

The protein resides in the cytoplasm. It carries out the reaction N(6)-carboxybiotinyl-L-lysyl-[protein] + acetyl-CoA = N(6)-biotinyl-L-lysyl-[protein] + malonyl-CoA. It functions in the pathway lipid metabolism; malonyl-CoA biosynthesis; malonyl-CoA from acetyl-CoA: step 1/1. In terms of biological role, component of the acetyl coenzyme A carboxylase (ACC) complex. First, biotin carboxylase catalyzes the carboxylation of biotin on its carrier protein (BCCP) and then the CO(2) group is transferred by the carboxyltransferase to acetyl-CoA to form malonyl-CoA. The sequence is that of Acetyl-coenzyme A carboxylase carboxyl transferase subunit alpha from Paramagnetospirillum magneticum (strain ATCC 700264 / AMB-1) (Magnetospirillum magneticum).